A 698-amino-acid chain; its full sequence is Elongation factor G (698 aa).

One can recognise a tr-type G domain in the interval Asp-10–Leu-285. GTP contacts are provided by residues Ala-19–Thr-26, Asp-83–His-87, and Asn-137–Asp-140.

This sequence belongs to the TRAFAC class translation factor GTPase superfamily. Classic translation factor GTPase family. EF-G/EF-2 subfamily.

Its subcellular location is the cytoplasm. Catalyzes the GTP-dependent ribosomal translocation step during translation elongation. During this step, the ribosome changes from the pre-translocational (PRE) to the post-translocational (POST) state as the newly formed A-site-bound peptidyl-tRNA and P-site-bound deacylated tRNA move to the P and E sites, respectively. Catalyzes the coordinated movement of the two tRNA molecules, the mRNA and conformational changes in the ribosome. In Lactobacillus johnsonii (strain CNCM I-12250 / La1 / NCC 533), this protein is Elongation factor G.